Consider the following 118-residue polypeptide: Acidic phospholipase A2 CM-I (118 aa).

7 disulfide bridges follow: Cys11/Cys70, Cys26/Cys117, Cys28/Cys44, Cys43/Cys98, Cys50/Cys91, Cys59/Cys84, and Cys77/Cys89. Ca(2+)-binding residues include Tyr27, Gly29, and Gly31. His47 is a catalytic residue. Asp48 is a Ca(2+) binding site. Asp92 is an active-site residue.

Belongs to the phospholipase A2 family. Group I subfamily. D49 sub-subfamily. Requires Ca(2+) as cofactor. In terms of tissue distribution, expressed by the venom gland.

It localises to the secreted. It carries out the reaction a 1,2-diacyl-sn-glycero-3-phosphocholine + H2O = a 1-acyl-sn-glycero-3-phosphocholine + a fatty acid + H(+). Functionally, snake venom phospholipase A2 (PLA2) that causes myonecrosis when injected intramuscularly, shows indirect hemolytic activity, abolishes twitches evoked by indirect stimulation earlier than those by direct stimulation (in the mouse phrenic nerve-diaphragm preparation) but does not produce complete neuromuscular block (up to 30 ug/ml) (in the chick biventer cervicis nerve-muscle preparation). PLA2 catalyzes the calcium-dependent hydrolysis of the 2-acyl groups in 3-sn-phosphoglycerides. In Naja mossambica (Mozambique spitting cobra), this protein is Acidic phospholipase A2 CM-I.